We begin with the raw amino-acid sequence, 187 residues long: dITP/XTP pyrophosphatase (187 aa).

Residue 7 to 12 coordinates substrate; it reads TGNKHK. Glu-36 and Asp-64 together coordinate Mg(2+). Asp-64 (proton acceptor) is an active-site residue. Substrate-binding positions include Ala-65, 140–143, Lys-163, and 168–169; these read FAFD and HR.

The protein belongs to the HAM1 NTPase family. As to quaternary structure, homodimer. It depends on Mg(2+) as a cofactor.

The catalysed reaction is XTP + H2O = XMP + diphosphate + H(+). The enzyme catalyses dITP + H2O = dIMP + diphosphate + H(+). It carries out the reaction ITP + H2O = IMP + diphosphate + H(+). Its function is as follows. Pyrophosphatase that catalyzes the hydrolysis of nucleoside triphosphates to their monophosphate derivatives, with a high preference for the non-canonical purine nucleotides XTP (xanthosine triphosphate), dITP (deoxyinosine triphosphate) and ITP. Seems to function as a house-cleaning enzyme that removes non-canonical purine nucleotides from the nucleotide pool, thus preventing their incorporation into DNA/RNA and avoiding chromosomal lesions. This is dITP/XTP pyrophosphatase from Methanothermobacter marburgensis (strain ATCC BAA-927 / DSM 2133 / JCM 14651 / NBRC 100331 / OCM 82 / Marburg) (Methanobacterium thermoautotrophicum).